Here is a 512-residue protein sequence, read N- to C-terminus: Colistin resistance protein EmrB (512 aa).

The next 14 helical transmembrane spans lie at 17-37 (WAIF…IQIV), 55-75 (VTWV…MSSI), 84-104 (VYYT…ALSW), 115-135 (IQGF…YLLF), 144-164 (LVMF…IGGW), 169-189 (FSWH…ATVI), 205-225 (SMDW…EYFL), 234-254 (LADT…MIFF), 280-300 (ITTF…PVFL), 314-334 (VMMV…WLIP), 341-361 (TVFV…HLSI), 376-396 (GIGL…TLPL), 412-432 (IGGA…TAMH), and 486-506 (FNDL…LTIF).

The protein belongs to the major facilitator superfamily. EmrB family.

The protein localises to the cell inner membrane. Probably part of an efflux pump system that contributes to adaptation to osmotic stress and resistance to colistin. The chain is Colistin resistance protein EmrB from Acinetobacter baumannii (strain ATCC 17978 / DSM 105126 / CIP 53.77 / LMG 1025 / NCDC KC755 / 5377).